The primary structure comprises 617 residues: Dihydroxy-acid dehydratase (617 aa).

Aspartate 82 lines the Mg(2+) pocket. Residue cysteine 123 participates in [2Fe-2S] cluster binding. Aspartate 124 and lysine 125 together coordinate Mg(2+). Lysine 125 carries the N6-carboxylysine modification. Cysteine 197 lines the [2Fe-2S] cluster pocket. Glutamate 497 contributes to the Mg(2+) binding site. The active-site Proton acceptor is the serine 523.

Belongs to the IlvD/Edd family. As to quaternary structure, homodimer. [2Fe-2S] cluster serves as cofactor. Mg(2+) is required as a cofactor.

It catalyses the reaction (2R)-2,3-dihydroxy-3-methylbutanoate = 3-methyl-2-oxobutanoate + H2O. It carries out the reaction (2R,3R)-2,3-dihydroxy-3-methylpentanoate = (S)-3-methyl-2-oxopentanoate + H2O. It participates in amino-acid biosynthesis; L-isoleucine biosynthesis; L-isoleucine from 2-oxobutanoate: step 3/4. It functions in the pathway amino-acid biosynthesis; L-valine biosynthesis; L-valine from pyruvate: step 3/4. Functions in the biosynthesis of branched-chain amino acids. Catalyzes the dehydration of (2R,3R)-2,3-dihydroxy-3-methylpentanoate (2,3-dihydroxy-3-methylvalerate) into 2-oxo-3-methylpentanoate (2-oxo-3-methylvalerate) and of (2R)-2,3-dihydroxy-3-methylbutanoate (2,3-dihydroxyisovalerate) into 2-oxo-3-methylbutanoate (2-oxoisovalerate), the penultimate precursor to L-isoleucine and L-valine, respectively. The polypeptide is Dihydroxy-acid dehydratase (Streptomyces coelicolor (strain ATCC BAA-471 / A3(2) / M145)).